The chain runs to 157 residues: Endoribonuclease YbeY (157 aa).

Residues histidine 116, histidine 120, and histidine 126 each coordinate Zn(2+).

It belongs to the endoribonuclease YbeY family. Zn(2+) serves as cofactor.

It localises to the cytoplasm. Its function is as follows. Single strand-specific metallo-endoribonuclease involved in late-stage 70S ribosome quality control and in maturation of the 3' terminus of the 16S rRNA. This is Endoribonuclease YbeY from Renibacterium salmoninarum (strain ATCC 33209 / DSM 20767 / JCM 11484 / NBRC 15589 / NCIMB 2235).